The following is a 297-amino-acid chain: Carboxysome assembly protein CcmO (297 aa).

Positions 1–29 are disordered; sequence MPTSPTMTSVPIARSPRPSYQQINQHQPS. Residues 18–29 show a composition bias toward polar residues; the sequence is PSYQQINQHQPS. BMC domains follow at residues 32-116 and 138-222; these read ALGL…AVFP and SIGL…HTLP.

This sequence belongs to the bacterial microcompartments protein family. As to quaternary structure, homooligomerizes, possibly as a trimer, interacts with CcmK in the carboxysome.

It is found in the carboxysome. Required for formation of the carboxysome, a polyhedral inclusion where RuBisCO (ribulose bisphosphate carboxylase, rbcL-rbcS) is sequestered. Required for recruitment of major shell protein CcmK2 to the pre-carboxysome. Suggested to be a carboxysome shell protein. This is Carboxysome assembly protein CcmO from Synechocystis sp. (strain ATCC 27184 / PCC 6803 / Kazusa).